Consider the following 423-residue polypeptide: Histidine--tRNA ligase (423 aa).

This sequence belongs to the class-II aminoacyl-tRNA synthetase family. Homodimer.

The protein localises to the cytoplasm. The enzyme catalyses tRNA(His) + L-histidine + ATP = L-histidyl-tRNA(His) + AMP + diphosphate + H(+). In Rhodococcus opacus (strain B4), this protein is Histidine--tRNA ligase.